Reading from the N-terminus, the 311-residue chain is Aspartate carbamoyltransferase catalytic subunit (311 aa).

Carbamoyl phosphate is bound by residues arginine 58 and threonine 59. Position 86 (lysine 86) interacts with L-aspartate. Positions 108, 136, and 139 each coordinate carbamoyl phosphate. Arginine 169 and arginine 224 together coordinate L-aspartate. Carbamoyl phosphate contacts are provided by glycine 265 and proline 266.

This sequence belongs to the aspartate/ornithine carbamoyltransferase superfamily. ATCase family. Heterododecamer (2C3:3R2) of six catalytic PyrB chains organized as two trimers (C3), and six regulatory PyrI chains organized as three dimers (R2).

It carries out the reaction carbamoyl phosphate + L-aspartate = N-carbamoyl-L-aspartate + phosphate + H(+). It participates in pyrimidine metabolism; UMP biosynthesis via de novo pathway; (S)-dihydroorotate from bicarbonate: step 2/3. Its function is as follows. Catalyzes the condensation of carbamoyl phosphate and aspartate to form carbamoyl aspartate and inorganic phosphate, the committed step in the de novo pyrimidine nucleotide biosynthesis pathway. The polypeptide is Aspartate carbamoyltransferase catalytic subunit (Geotalea uraniireducens (strain Rf4) (Geobacter uraniireducens)).